Consider the following 547-residue polypeptide: Glucose-6-phosphate isomerase (547 aa).

Catalysis depends on Glu-354, which acts as the Proton donor. Residues His-385 and Lys-513 contribute to the active site.

It belongs to the GPI family.

Its subcellular location is the cytoplasm. The catalysed reaction is alpha-D-glucose 6-phosphate = beta-D-fructose 6-phosphate. It functions in the pathway carbohydrate biosynthesis; gluconeogenesis. The protein operates within carbohydrate degradation; glycolysis; D-glyceraldehyde 3-phosphate and glycerone phosphate from D-glucose: step 2/4. In terms of biological role, catalyzes the reversible isomerization of glucose-6-phosphate to fructose-6-phosphate. This is Glucose-6-phosphate isomerase from Erwinia tasmaniensis (strain DSM 17950 / CFBP 7177 / CIP 109463 / NCPPB 4357 / Et1/99).